The chain runs to 237 residues: MIASLDELYHSELFFLPVMDENARLVGLEIIATFAAEDGAVRMPTELVAPRLSVEEQYCLFVEKLALLETCQHFFIQHKLIAWLNLPPAISDLLLLDSELFSRAARFPFFEVAINENYPGLNQGKNNETLANLAMHFPLILANFGAGEASTKAIFDGLFKRVMLDKNFIQQRAEMISFEPFMHAIVAQISSSCESLMIAGIDTEAMFARAAPLGFSAFQGGLWPPVPVSQLIKLVQR.

One can recognise an EAL domain in the interval 1–237 (MIASLDELYH…VSQLIKLVQR (237 aa)).

It belongs to the YdiV family. Interacts with FlhD in the FlhC(2)FlhD(4) heterohexamer, inhibiting its ability to activate transcription.

Acts as an anti-FlhC(2)FlhD(4) factor by binding to FlhD, decreasing its ability to bind DNA, and thus negatively regulates expression of flagellar class II operons, decreasing motility in nutrient-poor medium. Required for resistance to host phagocyte oxidase. The sequence is that of Anti-FlhC(2)FlhD(4) factor YdiV (ydiV) from Salmonella typhi.